An 827-amino-acid polypeptide reads, in one-letter code: Glycerol-3-phosphate acyltransferase (827 aa).

The HXXXXD motif signature appears at 309–314 (CHRSHI).

The protein belongs to the GPAT/DAPAT family.

The protein resides in the cell inner membrane. It catalyses the reaction sn-glycerol 3-phosphate + an acyl-CoA = a 1-acyl-sn-glycero-3-phosphate + CoA. It functions in the pathway phospholipid metabolism; CDP-diacylglycerol biosynthesis; CDP-diacylglycerol from sn-glycerol 3-phosphate: step 1/3. In Ectopseudomonas mendocina (strain ymp) (Pseudomonas mendocina), this protein is Glycerol-3-phosphate acyltransferase.